The sequence spans 499 residues: MSTRKAVIGYYFIPTNQINNYTETDTSVVPFPVSNITPAKAKQLTHINFSFLDINSNLECAWDPATNDAKARDVVNRLTALKAHNPSLRIMFSIGGWYYSNDLGVSHANYVNAVKTPAARTKFAQSCVRIMKDYGFDGVDIDWEYPQAAEVDGFIAALQEIRTLLNQQTIADGRQALPYQLTIAGAGGAFFLSRYYSKLAQIVAPLDYINLMTYDLAGPWEKITNHQAALFGDAAGPTFYNALREANLGWSWEELTRAFPSPFSLTVDAAVQQHLMMEGVPSAKIVMGVPFYGRAFKGVSGGNGGQYSSHSTPGEDPYPNADYWLVGCDECVRDKDPRIASYRQLEQMLQGNYGYQRLWNDKTKTPYLYHAQNGLFVTYDDAESFKYKAKYIKQQQLGGVMFWHLGQDNRNGDLLAALDRYFNAADYDDSQLDMGTGLRYTGVGPGNLPIMTAPAYVPGTTYAQGALVSYQGYVWQTKWGYITSAPGSDSAWLKVGRLA.

The N-terminal stretch at 1–41 (MSTRKAVIGYYFIPTNQINNYTETDTSVVPFPVSNITPAKA) is a signal peptide. The GH18 domain maps to 42–425 (KQLTHINFSF…AALDRYFNAA (384 aa)). Residues 68 to 69 (DA) and 95 to 98 (GGWY) contribute to the chitin site. Residue glutamate 144 is the Proton donor of the active site. Residues tyrosine 145, 212–215 (MTYD), and tryptophan 403 each bind chitin. Positions 438 to 498 (LRYTGVGPGN…DSAWLKVGRL (61 aa)) constitute a Chitin-binding type-3 domain.

The protein belongs to the glycosyl hydrolase 18 family. Chitinase class II subfamily.

The catalysed reaction is Random endo-hydrolysis of N-acetyl-beta-D-glucosaminide (1-&gt;4)-beta-linkages in chitin and chitodextrins.. The polypeptide is Chitinase B (chiB) (Serratia marcescens).